The chain runs to 148 residues: 3-dehydroquinate dehydratase (148 aa).

The active-site Proton acceptor is Tyr-23. Substrate contacts are provided by Asn-74, His-80, and Asp-87. The active-site Proton donor is His-100. Substrate-binding positions include 101–102 (IS) and Arg-111.

This sequence belongs to the type-II 3-dehydroquinase family. Homododecamer.

The catalysed reaction is 3-dehydroquinate = 3-dehydroshikimate + H2O. It participates in metabolic intermediate biosynthesis; chorismate biosynthesis; chorismate from D-erythrose 4-phosphate and phosphoenolpyruvate: step 3/7. Functionally, catalyzes a trans-dehydration via an enolate intermediate. The sequence is that of 3-dehydroquinate dehydratase from Halothermothrix orenii (strain H 168 / OCM 544 / DSM 9562).